The sequence spans 37 residues: Large ribosomal subunit protein bL36c (37 aa).

The protein belongs to the bacterial ribosomal protein bL36 family.

The protein resides in the plastid. Its subcellular location is the cyanelle. This Cyanophora paradoxa protein is Large ribosomal subunit protein bL36c (rpl36).